Consider the following 530-residue polypeptide: UDP-glucuronosyltransferase 2B17 (530 aa).

The first 23 residues, 1–23 (MPGKWISALLLLQISCCFRSVKC), serve as a signal peptide directing secretion. N-linked (GlcNAc...) asparagine glycosylation is found at N316 and N483. A helical membrane pass occupies residues 494-510 (VIGFLLSCVATTIVLSV).

Belongs to the UDP-glycosyltransferase family.

The protein resides in the endoplasmic reticulum membrane. It carries out the reaction glucuronate acceptor + UDP-alpha-D-glucuronate = acceptor beta-D-glucuronoside + UDP + H(+). The catalysed reaction is 17alpha-estradiol + UDP-alpha-D-glucuronate = 17alpha-estradiol 3-O-(beta-D-glucuronate) + UDP + H(+). The enzyme catalyses 17alpha-estradiol + UDP-alpha-D-glucuronate = 17alpha-estradiol 17-O-(beta-D-glucuronate) + UDP + H(+). It catalyses the reaction 17beta-estradiol + UDP-alpha-D-glucuronate = 17beta-estradiol 17-O-(beta-D-glucuronate) + UDP + H(+). It carries out the reaction 17beta-hydroxy-5alpha-androstan-3-one + UDP-alpha-D-glucuronate = 5alpha-dihydrotestosterone 17-O-(beta-D-glucuronate) + UDP + H(+). The catalysed reaction is testosterone + UDP-alpha-D-glucuronate = testosterone 17-O-(beta-D-glucuronate) + UDP + H(+). In terms of biological role, UDP-glucuronosyltransferase (UGT) that catalyzes phase II biotransformation reactions in which lipophilic substrates are conjugated with glucuronic acid to increase the metabolite's water solubility, thereby facilitating excretion into either the urine or bile. Catalyzes the glucuronidation of endogenous steroid hormones such as androgens (epitestosterone, androsterone) and estrogens (estradiol, epiestradiol). The sequence is that of UDP-glucuronosyltransferase 2B17 from Mus musculus (Mouse).